A 366-amino-acid chain; its full sequence is Ferredoxin--NADP reductase (366 aa).

FAD is bound by residues Asp-51, Gln-59, Tyr-64, Val-104, Phe-139, Asp-308, and Thr-349.

It belongs to the ferredoxin--NADP reductase type 2 family. As to quaternary structure, homodimer. It depends on FAD as a cofactor.

It carries out the reaction 2 reduced [2Fe-2S]-[ferredoxin] + NADP(+) + H(+) = 2 oxidized [2Fe-2S]-[ferredoxin] + NADPH. This is Ferredoxin--NADP reductase from Polaromonas naphthalenivorans (strain CJ2).